The sequence spans 361 residues: Velvet complex subunit B (361 aa).

The region spanning 1–336 (MIVRTEDQKL…GNQGQKLPLR (336 aa)) is the Velvet domain. Disordered stretches follow at residues 42-222 (PSST…NNIP) and 327-361 (GNQG…EDDS). 2 stretches are compositionally biased toward low complexity: residues 57-74 (PSAS…SRPP) and 93-107 (PPSS…SQSQ). Residues 108-127 (DNLTPSSPYPPHSNSEQPQT) show a composition bias toward polar residues. Residues 130 to 147 (YPPPPPIDRAAPFPPPVL) are compositionally biased toward pro residues. Polar residues-rich tracts occupy residues 149–168 (SIQS…NNDD), 181–196 (GYTN…YGSG), and 212–222 (SGNATPQNNIP). The span at 335-349 (LRNRHGTGSKRRRRN) shows a compositional bias: basic residues.

It belongs to the velvet family. VelB subfamily. Component of the heterotrimeric velvet complex composed of laeA, veA and velB; VeA acting as a bridging protein between laeA and velB. Forms a heterodimeric complex with vosA; the formation of the velB-vosA complex is light-dependent.

It localises to the nucleus. It is found in the cytoplasm. Functionally, component of the velvet transcription factor complex that controls sexual/asexual developmental ratio in response to light, promoting sexual development in the darkness while stimulating asexual sporulation under illumination. The velvet complex acts as a global regulator for secondary metabolite gene expression. Component of the velB-VosA heterodimeric complex that plays a dual role in activating genes associated with spore maturation and repressing certain development-associated genes. The velB-VosA complex binds DNA through the DNA-binding domain of vosA that recognizes an 11-nucleotide consensus sequence 5'-CTGGCCGCGGC-3' consisting of two motifs in the promoters of key developmental regulatory genes. This chain is Velvet complex subunit B, found in Coprinopsis cinerea (strain Okayama-7 / 130 / ATCC MYA-4618 / FGSC 9003) (Inky cap fungus).